Reading from the N-terminus, the 532-residue chain is Apolipoprotein N-acyltransferase (532 aa).

6 helical membrane passes run 37-57 (IFVA…GAIA), 75-95 (WWFG…ALLV), 106-126 (LAVL…AMIA), 128-148 (LLWS…ALAE), 179-199 (VIGL…PALL), and 207-227 (TGIG…AWTL). The CN hydrolase domain occupies 245–494 (VQPSIAQAMK…VGVVDSYLPS (250 aa)). The active-site Proton acceptor is the E289. K353 is an active-site residue. Residue C406 is the Nucleophile of the active site. Residues 505–525 (GWIQTVLILLTLLAASVGLIL) form a helical membrane-spanning segment.

It belongs to the CN hydrolase family. Apolipoprotein N-acyltransferase subfamily.

Its subcellular location is the cell inner membrane. The catalysed reaction is N-terminal S-1,2-diacyl-sn-glyceryl-L-cysteinyl-[lipoprotein] + a glycerophospholipid = N-acyl-S-1,2-diacyl-sn-glyceryl-L-cysteinyl-[lipoprotein] + a 2-acyl-sn-glycero-3-phospholipid + H(+). The protein operates within protein modification; lipoprotein biosynthesis (N-acyl transfer). In terms of biological role, catalyzes the phospholipid dependent N-acylation of the N-terminal cysteine of apolipoprotein, the last step in lipoprotein maturation. This chain is Apolipoprotein N-acyltransferase, found in Brucella suis biovar 1 (strain 1330).